A 98-amino-acid chain; its full sequence is UPF0251 protein SO_0727 (98 aa).

This sequence belongs to the UPF0251 family.

The polypeptide is UPF0251 protein SO_0727 (Shewanella oneidensis (strain ATCC 700550 / JCM 31522 / CIP 106686 / LMG 19005 / NCIMB 14063 / MR-1)).